Consider the following 826-residue polypeptide: U4/U6 snRNA-associated-splicing factor PRP24 (826 aa).

RRM domains follow at residues 310–385, 386–463, 477–554, and 598–670; these read TSVF…EAAG, ITLY…YSDP, REVH…LSVS, and RSFA…AVPQ.

The protein resides in the nucleus. Its function is as follows. Functions as a recycling factor of the spliceosome, a machinery that forms on each precursor-messenger RNA (pre-mRNA) and catalyzes the removal of introns. Chaperones the re-annealing of U4 and U6 snRNAs (small nuclear RNAs) released from previous rounds of splicing, an initial step in reforming the U4/U6-U5 tri-snRNP (small nuclear ribonucleoprotein) that can reassemble into another spliceosome complex; this step involves binding U6 and facilitating the unwinding of the U6 internal stem loop, followed by base-pairing of U6 to U4. This Ophiostoma ulmi (Dutch elm disease fungus) protein is U4/U6 snRNA-associated-splicing factor PRP24.